The sequence spans 212 residues: GTP-binding protein EngB (212 aa).

An EngB-type G domain is found at 36-212 (TAPEVAFAGR…LRAAVYDAII (177 aa)). Residues 44-51 (GRSNVGKS), 71-75 (GRTQE), 91-94 (DMPG), 158-161 (TKSD), and 192-194 (TSS) each bind GTP. 2 residues coordinate Mg(2+): Ser-51 and Thr-73.

The protein belongs to the TRAFAC class TrmE-Era-EngA-EngB-Septin-like GTPase superfamily. EngB GTPase family. Requires Mg(2+) as cofactor.

Functionally, necessary for normal cell division and for the maintenance of normal septation. The sequence is that of GTP-binding protein EngB from Zymomonas mobilis subsp. mobilis (strain ATCC 31821 / ZM4 / CP4).